The chain runs to 55 residues: MAKKAREKIKMISSAGTGHYYTTTKNKRNTPDKLKLKKYDPVIRKHILYNEGKIK.

This sequence belongs to the bacterial ribosomal protein bL33 family.

The sequence is that of Large ribosomal subunit protein bL33 from Buchnera aphidicola subsp. Acyrthosiphon pisum (strain 5A).